The sequence spans 126 residues: uncharacterized protein (126 aa).

This is an uncharacterized protein from Methanocaldococcus jannaschii (strain ATCC 43067 / DSM 2661 / JAL-1 / JCM 10045 / NBRC 100440) (Methanococcus jannaschii).